The chain runs to 342 residues: MSQSPAAHVPVLYTQVLDGLQVTENGTYLDGTFGRGGHARGVLEHLGPGGRLLVMDKDPEAIAVAEHSFGGDARVSIHRGSFAGLGQVVAAATVDGILLDLGVSSPQLDVAGRGFSFGKDGPLDMRMDPDSGQSAAEWLAQASDREIADVLWTYGEERQSRRIARAIVARRAEQPLLRTAQLADLIASVMPRGDSKTHPATRSFQAIRIHINRELADLEAGLDAALGALKPGGRLAVISFHSLEDRIVKQFMARYAKAPPSNRRLPEAQPFVATLQLVSGAIKADDAELHVNPRARSAVLRVAEKLGLGNGESGMGKGNSAAASRFPTADSPFPASANGDAA.

S-adenosyl-L-methionine-binding positions include 36 to 38 (GGH), aspartate 56, phenylalanine 82, aspartate 100, and glutamine 107. The disordered stretch occupies residues 311-342 (GESGMGKGNSAAASRFPTADSPFPASANGDAA).

This sequence belongs to the methyltransferase superfamily. RsmH family.

Its subcellular location is the cytoplasm. The catalysed reaction is cytidine(1402) in 16S rRNA + S-adenosyl-L-methionine = N(4)-methylcytidine(1402) in 16S rRNA + S-adenosyl-L-homocysteine + H(+). Specifically methylates the N4 position of cytidine in position 1402 (C1402) of 16S rRNA. The chain is Ribosomal RNA small subunit methyltransferase H from Xanthomonas axonopodis pv. citri (strain 306).